The chain runs to 318 residues: Bis(5'-nucleosyl)-tetraphosphatase, symmetrical (318 aa).

Positions 269-318 (PGREVTGPAPVARAPRRPRERLGRQRSRGNRGNAGNTAVPAKPQVDTPQD) are disordered. The span at 282–297 (APRRPRERLGRQRSRG) shows a compositional bias: basic residues.

It belongs to the Ap4A hydrolase family.

It carries out the reaction P(1),P(4)-bis(5'-adenosyl) tetraphosphate + H2O = 2 ADP + 2 H(+). In terms of biological role, hydrolyzes diadenosine 5',5'''-P1,P4-tetraphosphate to yield ADP. In Xanthomonas oryzae pv. oryzae (strain KACC10331 / KXO85), this protein is Bis(5'-nucleosyl)-tetraphosphatase, symmetrical.